The following is a 584-amino-acid chain: Pentatricopeptide repeat-containing protein At2g01510, mitochondrial (584 aa).

The N-terminal 20 residues, 1-20 (MLAKQTPLTKQMLSELLRAS), are a transit peptide targeting the mitochondrion. PPR repeat units lie at residues 73 to 107 (RIFL…GVRP), 108 to 142 (DEFT…GFGC), 143 to 173 (LGIV…MQVK), 174 to 208 (DLVA…AVQF), 209 to 243 (DSFT…EIDC), 244 to 274 (NIIV…MKQR), 275 to 309 (NVVS…GLRP), 310 to 344 (NYVT…NDKN), and 348 to 378 (RKEH…MPVE). Residues 383 to 458 (IWGALLGACA…VAAYSSVEFE (76 aa)) are type E motif. Residues 459–489 (GKIHFFNRGDKSHPQSKAIYEKLDEILKKIR) are type E(+) motif. The tract at residues 490–584 (KMGYVPDTCS…NGVCSCKEFW (95 aa)) is type DYW motif.

This sequence belongs to the PPR family. PCMP-H subfamily.

The protein localises to the mitochondrion. In Arabidopsis thaliana (Mouse-ear cress), this protein is Pentatricopeptide repeat-containing protein At2g01510, mitochondrial (PCMP-H37).